Here is a 302-residue protein sequence, read N- to C-terminus: Zinc transporter ZIP1 (302 aa).

The Extracellular segment spans residues 1–6 (MEYLLQ). Residues 7 to 27 (VKIAALVGLLFLTLIFGFIPA) form a helical membrane-spanning segment. The Cytoplasmic segment spans residues 28–44 (RVKWFRDTDGTETHRTV). The chain crosses the membrane as a helical span at residues 45–65 (LSLISCFAGGVFLSACFLDII). Residues 66-80 (PDYLSDINTELHARQ) lie on the Extracellular side of the membrane. Residues 81–101 (LETSFPLPEFIMAAGFFTVLI) traverse the membrane as a helical segment. The Cytoplasmic portion of the chain corresponds to 102–158 (LERIVLNCKEMRATHEERTTLIPERKSGHGHGHGDGPDPESSGHHVHVDFQAHSPFR). The disordered stretch occupies residues 123–145 (IPERKSGHGHGHGDGPDPESSGH). A helical transmembrane segment spans residues 159 to 179 (SFMLFLSLSLHSIFEGLAIGL). Residues 180–185 (QTTDPK) are Extracellular-facing. The chain crosses the membrane as a helical span at residues 186–206 (VVEICIAILVHKSIIVFSLAV). Topologically, residues 207-216 (KLVQSAIPPL) are cytoplasmic. The chain crosses the membrane as a helical span at residues 217–237 (WVAAYIGVFALMSPVGIAIGI). At 238–251 (SVMEAQLAAGPLIQ) the chain is on the extracellular side. A helical transmembrane segment spans residues 252–272 (AILEGFAAGTFVYITFLEILP). Residues 273 to 281 (HELNSPGKQ) lie on the Cytoplasmic side of the membrane. Residues 282–302 (LLKVLFLLLGFSIMAALSFLG) traverse the membrane as a helical segment.

This sequence belongs to the ZIP transporter (TC 2.A.5) family. Highest levels in ovary, lower levels in intestine and gill, barely detected in kidney.

It localises to the cell membrane. The protein resides in the endoplasmic reticulum membrane. The enzyme catalyses Zn(2+)(in) = Zn(2+)(out). Transporter for the divalent cation Zn(2+). Mediates the influx of Zn(2+) into cells from extracellular space. The sequence is that of Zinc transporter ZIP1 (slc39a1) from Takifugu rubripes (Japanese pufferfish).